The chain runs to 432 residues: Glutamyl-tRNA reductase (432 aa).

Residues 49–52 (TCNR), S101, 106–108 (EPQ), and Q112 contribute to the substrate site. C50 (nucleophile) is an active-site residue. 181 to 186 (GAGETI) serves as a coordination point for NADP(+). Residues 407–432 (FPEKPGYQHPPIATPIVRTDDADPAP) form a disordered region.

This sequence belongs to the glutamyl-tRNA reductase family. Homodimer.

The enzyme catalyses (S)-4-amino-5-oxopentanoate + tRNA(Glu) + NADP(+) = L-glutamyl-tRNA(Glu) + NADPH + H(+). Its pathway is porphyrin-containing compound metabolism; protoporphyrin-IX biosynthesis; 5-aminolevulinate from L-glutamyl-tRNA(Glu): step 1/2. Catalyzes the NADPH-dependent reduction of glutamyl-tRNA(Glu) to glutamate 1-semialdehyde (GSA). The sequence is that of Glutamyl-tRNA reductase from Xanthomonas oryzae pv. oryzae (strain MAFF 311018).